The primary structure comprises 276 residues: Large ribosomal subunit protein uL2 (276 aa).

The interval 224 to 276 is disordered; sequence VMNPVDHPHGGGEGKAPIGRKSPMTPWGKPTLGFKTRKKKNKSDKFIIRRRKK. The span at 258–276 shows a compositional bias: basic residues; the sequence is KTRKKKNKSDKFIIRRRKK.

This sequence belongs to the universal ribosomal protein uL2 family. As to quaternary structure, part of the 50S ribosomal subunit. Forms a bridge to the 30S subunit in the 70S ribosome.

One of the primary rRNA binding proteins. Required for association of the 30S and 50S subunits to form the 70S ribosome, for tRNA binding and peptide bond formation. It has been suggested to have peptidyltransferase activity; this is somewhat controversial. Makes several contacts with the 16S rRNA in the 70S ribosome. The protein is Large ribosomal subunit protein uL2 of Geobacillus sp. (strain WCH70).